The sequence spans 710 residues: TRP-like ion channel pkd2 (710 aa).

Residues 1-23 form the signal peptide; it reads MRLWRSPLLLLVVVVELFSWADA. Transmembrane regions (helical) follow at residues 173-193, 197-217, 322-342, 376-396, 404-424, 466-486, 492-512, 525-545, and 555-575; these read WVMC…SPVL, ALWE…IQAL, FFAT…LVAM, FFYR…MWEI, LAFL…YAFV, FFYF…FIGF, KVQG…MVIL, IGVA…CQAF, and IGII…LGIF. 2 positions are modified to phosphoserine: Ser-599 and Ser-632. The tract at residues 689-710 is disordered; it reads RISENNNNAERRRKPLPNNAFR.

It belongs to the transient receptor potential (TRP) ion channel family. Interacts with rho1.

It localises to the cell membrane. The protein localises to the golgi apparatus membrane. Its function is as follows. Acts as a key signaling component in the regulation of cell shape and cell wall synthesis through interaction with GTPase Rho1. The sequence is that of TRP-like ion channel pkd2 (pkd2) from Schizosaccharomyces pombe (strain 972 / ATCC 24843) (Fission yeast).